A 257-amino-acid polypeptide reads, in one-letter code: MDQVYNIVMAYILTLIISPLYSYLIGSLNASIILSLVFKKQDVRLFASKNAGMTNMIRVHGKKLGILTLFLDIIKPITTVSLTYIIYKYALDAPFDLSNGFNQAILVYFGGIFTIIGHCYPIFFKFQGGKGVACYGGFLITVDPIVALIGIITLLVILLITKYMSLSAMITATFTCFLVLVPGINYIPYYNQNFTTYFFDLNYVIKGIWYVWFFLLVSASLLIYRHKTNILSIATKQERKTILFHTKSKDNLSDVNK.

6 consecutive transmembrane segments (helical) span residues 7–27, 66–86, 104–124, 140–160, 164–184, and 203–223; these read IVMA…LIGS, ILTL…TYII, AILV…PIFF, ITVD…ILLI, MSLS…VPGI, and YVIK…SLLI.

The protein belongs to the PlsY family. In terms of assembly, probably interacts with PlsX.

The protein localises to the cell membrane. The enzyme catalyses an acyl phosphate + sn-glycerol 3-phosphate = a 1-acyl-sn-glycero-3-phosphate + phosphate. Its pathway is lipid metabolism; phospholipid metabolism. In terms of biological role, catalyzes the transfer of an acyl group from acyl-phosphate (acyl-PO(4)) to glycerol-3-phosphate (G3P) to form lysophosphatidic acid (LPA). This enzyme utilizes acyl-phosphate as fatty acyl donor, but not acyl-CoA or acyl-ACP. This chain is Glycerol-3-phosphate acyltransferase, found in Ureaplasma parvum serovar 3 (strain ATCC 700970).